A 120-amino-acid chain; its full sequence is Putative defensin-like protein 179 (120 aa).

An N-terminal signal peptide occupies residues 1–27 (MERTSTSLLFLLSLLIIFASAVNQIRA). 7 disulfide bridges follow: Cys37-Cys56, Cys40-Cys63, Cys44-Cys65, Cys74-Cys120, Cys85-Cys105, Cys90-Cys114, and Cys94-Cys116.

It belongs to the DEFL family.

It localises to the secreted. This chain is Putative defensin-like protein 179 (LCR57), found in Arabidopsis thaliana (Mouse-ear cress).